The chain runs to 100 residues: Pancreatic polypeptide prohormone (100 aa).

Positions Met1–Gly29 are cleaved as a signal peptide. At Tyr65 the chain carries Tyrosine amide.

Belongs to the NPY family. No icosapeptide-like peptide is cleaved from the C-terminal.

The protein localises to the secreted. In terms of biological role, hormone secreted by pancreatic cells that acts as a regulator of pancreatic and gastrointestinal functions probably by signaling through the G protein-coupled receptor NPY4R2. The protein is Pancreatic polypeptide prohormone (Ppy) of Mus musculus (Mouse).